The following is a 251-amino-acid chain: Hydroxyacylglutathione hydrolase (251 aa).

Residues histidine 53, histidine 55, aspartate 57, histidine 58, histidine 110, aspartate 127, and histidine 165 each contribute to the Zn(2+) site.

This sequence belongs to the metallo-beta-lactamase superfamily. Glyoxalase II family. As to quaternary structure, monomer. Zn(2+) serves as cofactor.

The catalysed reaction is an S-(2-hydroxyacyl)glutathione + H2O = a 2-hydroxy carboxylate + glutathione + H(+). It functions in the pathway secondary metabolite metabolism; methylglyoxal degradation; (R)-lactate from methylglyoxal: step 2/2. Thiolesterase that catalyzes the hydrolysis of S-D-lactoyl-glutathione to form glutathione and D-lactic acid. The polypeptide is Hydroxyacylglutathione hydrolase (Cronobacter sakazakii (strain ATCC BAA-894) (Enterobacter sakazakii)).